A 144-amino-acid polypeptide reads, in one-letter code: Giant hemoglobin AIII chain (144 aa).

Positions 2-144 (ECGPLQRLKV…DVITGGIQGN (143 aa)) constitute a Globin domain. A heme b-binding site is contributed by histidine 95.

The protein belongs to the globin family. In terms of assembly, giant hemoglobin is composed of four heme-containing chains (AI to AIV), and two linker chains (AV and AVI).

This Lamellibrachia sp. (Deep-sea giant tube worm) protein is Giant hemoglobin AIII chain.